A 195-amino-acid polypeptide reads, in one-letter code: CASP-like protein 1B1 (195 aa).

The Cytoplasmic portion of the chain corresponds to 1-15 (MAKLALAATSGKSCK). A helical transmembrane segment spans residues 16–36 (ILLGLRLLAFSATLSAAIVMG). Topologically, residues 37–67 (LNKETETFVVGKVGNTPIKATFTAKFDHTPA) are extracellular. Residues 68–88 (FVFFVVANAMVSFHNLLMIAL) form a helical membrane-spanning segment. Topologically, residues 89–104 (QIFGGKMEFTGFRLLS) are cytoplasmic. A helical membrane pass occupies residues 105–125 (VAILDMLNVTLISAAANAAAF). The Extracellular portion of the chain corresponds to 126–154 (MAEVGKNGNKHARWDKICDRFATYCDHGA). The helical transmembrane segment at 155 to 175 (GALIAAFAGVILMLIISAASI) threads the bilayer. At 176–195 (SRLAQQNKCCSTTASPSVVP) the chain is on the cytoplasmic side.

This sequence belongs to the Casparian strip membrane proteins (CASP) family. As to quaternary structure, homodimer and heterodimers.

Its subcellular location is the cell membrane. The chain is CASP-like protein 1B1 from Arabidopsis lyrata subsp. lyrata (Lyre-leaved rock-cress).